The following is a 291-amino-acid chain: 2-dehydro-3-deoxyphosphooctonate aldolase 2 (291 aa).

Position 2 is an N-acetylalanine (A2).

Belongs to the KdsA family. As to expression, expressed in roots, apical meristem, emerging leaves, hydathodes of young leaves, styles of mature flowers and funicules of mature siliques.

It localises to the cytoplasm. It catalyses the reaction D-arabinose 5-phosphate + phosphoenolpyruvate + H2O = 3-deoxy-alpha-D-manno-2-octulosonate-8-phosphate + phosphate. Its function is as follows. Catalyzes the stereospecific condensation of D-arabinose 5-phosphate and phosphoenolpyruvate to form 3-deoxy-D-manno-octulosonate 8-phosphate (KDO-8-phosphate) and inorganic phosphate. Involved in the biosynthesis of 3-deoxy-D-manno-octulosonate (KDO) which is an indispensable component of rhamnogalacturonan II (RG-II), a structurally complex pectic polysaccharide of the primary cell wall. RG-II is essential for the cell wall integrity of rapidly growing tissues and pollen tube growth and elongation. This chain is 2-dehydro-3-deoxyphosphooctonate aldolase 2 (KDSA2), found in Arabidopsis thaliana (Mouse-ear cress).